Consider the following 116-residue polypeptide: Large ribosomal subunit protein eL22B (116 aa).

The protein belongs to the eukaryotic ribosomal protein eL22 family.

The protein is Large ribosomal subunit protein eL22B (rpl22a) of Dictyostelium discoideum (Social amoeba).